A 365-amino-acid chain; its full sequence is Anhydro-N-acetylmuramic acid kinase (365 aa).

An ATP-binding site is contributed by 12–19; it reads GTSMDGMD.

Belongs to the anhydro-N-acetylmuramic acid kinase family.

It catalyses the reaction 1,6-anhydro-N-acetyl-beta-muramate + ATP + H2O = N-acetyl-D-muramate 6-phosphate + ADP + H(+). Its pathway is amino-sugar metabolism; 1,6-anhydro-N-acetylmuramate degradation. It functions in the pathway cell wall biogenesis; peptidoglycan recycling. Its function is as follows. Catalyzes the specific phosphorylation of 1,6-anhydro-N-acetylmuramic acid (anhMurNAc) with the simultaneous cleavage of the 1,6-anhydro ring, generating MurNAc-6-P. Is required for the utilization of anhMurNAc either imported from the medium or derived from its own cell wall murein, and thus plays a role in cell wall recycling. This Pseudomonas paraeruginosa (strain DSM 24068 / PA7) (Pseudomonas aeruginosa (strain PA7)) protein is Anhydro-N-acetylmuramic acid kinase.